We begin with the raw amino-acid sequence, 427 residues long: Inward rectifier potassium channel 2 (427 aa).

Residues 1 to 81 (MGSVRTNRYS…IFTTCVDIRW (81 aa)) lie on the Cytoplasmic side of the membrane. Cys-76 is subject to S-nitrosocysteine. The chain crosses the membrane as a helical span at residues 82 to 106 (RWMLVIFCLAFVLSWLFFGCVFWLI). Residues 107 to 128 (ALLHGDLDASKEGKACVSEVNS) are Extracellular-facing. Residues 129–140 (FTAAFLFSIETQ) constitute an intramembrane region (helical; Pore-forming). An intramembrane region (pore-forming) is located at residues 141–147 (TTIGYGF). The short motif at 142-147 (TIGYGF) is the Selectivity filter element. Residues 148 to 156 (RCVTDECPI) lie on the Extracellular side of the membrane. Residues 157-178 (AVFMVVFQSIVGCIIDAFIIGA) traverse the membrane as a helical segment. The Cytoplasmic segment spans residues 179 to 427 (VMAKMAKPKK…PRPLRRESEI (249 aa)). Residues 181–208 (AKMAKPKKRNETLVFSHNAVIAMRDGKL) form a polyphosphoinositide (PIP2)-binding region. Residues 384–427 (SKEEDDSENGVPESTSTDTPPDIDLHNQASVPLEPRPLRRESEI) are disordered. Positions 425–427 (SEI) match the PDZ-binding motif.

It belongs to the inward rectifier-type potassium channel (TC 1.A.2.1) family. KCNJ2 subfamily. As to quaternary structure, homotetramer. Homomultimeric and heteromultimeric association with KCNJ4/Kir2.3. Can form heteromeric channels with Kir2.6/KCNJ18. Associates, via its PDZ-recognition domain, with a complex containing LIN7A, LIN7B, LIN7C, DLG1, CASK and APBA1. S-nitrosylation increases the open probability and inward rectifying currents.

The protein resides in the cell membrane. It is found in the sarcolemma. Its subcellular location is the T-tubule. It catalyses the reaction K(+)(in) = K(+)(out). Its activity is regulated as follows. Activated by phosphatidylinositol 4,5 biphosphate (PtdIns(4,5)P2). Inward rectifier potassium channels are characterized by a greater tendency to allow potassium to flow into the cell rather than out of it. Their voltage dependence is regulated by the concentration of extracellular potassium; as external potassium is raised, the voltage range of the channel opening shifts to more positive voltages. The inward rectification is mainly due to the blockage of outward current by internal magnesium. Can be blocked by extracellular barium or cesium. Probably participates in establishing action potential waveform and excitability of neuronal and muscle tissues. In Macaca mulatta (Rhesus macaque), this protein is Inward rectifier potassium channel 2 (KCNJ2).